The following is a 218-amino-acid chain: DNA ADP-ribosyl transferase (218 aa).

A DarT domain is found at 14-217; that stretch reads ALIWRIVHRD…SVHTRSGWYF (204 aa). Residues 18–20 and Arg57 contribute to the NAD(+) site; that span reads RIV. Positions 41 to 59 are NAD(+)-binding element; the sequence is QAENWINIGNPELIGKRAG. Arg57 serves as the catalytic Proton acceptor. Residues 123–170 form an ADP-ribosylating turn-turn loop region; it reads TDSHAYYNWTNYYTSLNSLDQIDWPILQARDFRRDPDDPAKFERYQAE. Glu170 is an active-site residue.

Belongs to the DarT ADP-ribosyltransferase family. Interacts with cognate antitoxin DarG (via C-terminus); this heterodimeric complex neutralizes the toxic effect of DarT by preventing ssDNA binding to DarT and consequently inactivating the toxin by direct protein-protein interactions.

It carries out the reaction a thymidine in DNA + NAD(+) = an N-(ADP-alpha-D-ribosyl)-thymidine in DNA + nicotinamide + H(+). In terms of biological role, toxic component of the hybrid type II/IV toxin-antitoxin (TA) system DarTG, which plays a crucial role in controlling bacterial growth and bacteriophage infection. ADP-ribosylates ssDNA in the sequence TTT/TCT. In case of phage infection, DarT toxin ADP-ribosylates DNA, which inhibits both viral DNA and RNA synthesis and leads to abortive infection. Its toxic effect is neutralized by cognate antitoxin DarG. May target ssDNA loops during DNA replication, probably modifies thymidine. Wild-type protein cannot be expressed at low levels in the absence of its cognate antitoxin, but a mutant protein (G49D) can be expressed, which slows growth, rapidly inhibits DNA replication, and induces RecA expression and the SOS response. The slow growth phenotype can be suppressed by cognate antitoxin DarG. Has no activity on dsDNA in vitro. In vivo ADP-ribosylates genomic DNA (gDNA). Genetic data strongly suggests ADP-ribosylation by DarT probably generates ssDNA gaps that are repaired by the RecFOR-mediated homologous recombination pathway (RuvAB, RecG) and resolved by RuvC. In some cases these gaps probably migrate into dsDNA, where they are resolved by nucleotide excision repair (NER) detected by UvrAB, excised by UvrC, removed by UvrD, and repaired by Pol I and ligase. Other pathways may also be involved in ADP-ribosylation removal from DNA. In Escherichia coli O127:H6 (strain E2348/69 / EPEC), this protein is DNA ADP-ribosyl transferase.